A 392-amino-acid chain; its full sequence is Stilbene synthase 6 (392 aa).

55-58 is a binding site for substrate; it reads KFNR. Cysteine 164 is an active-site residue. Residues leucine 267 and 305-307 contribute to the substrate site; that span reads GGP.

It belongs to the thiolase-like superfamily. Chalcone/stilbene synthases family. As to quaternary structure, homodimer.

Its subcellular location is the cytoplasm. It catalyses the reaction 4-coumaroyl-CoA + 3 malonyl-CoA + 3 H(+) = trans-resveratrol + 4 CO2 + 4 CoA. The protein operates within phytoalexin biosynthesis; 3,4',5-trihydroxystilbene biosynthesis; 3,4',5-trihydroxystilbene from trans-4-coumarate: step 2/2. Its function is as follows. Mediates resistance to pathogens which are sensitive to stilbenes. The protein is Stilbene synthase 6 (STS) of Vitis vinifera (Grape).